A 155-amino-acid chain; its full sequence is Small ribosomal subunit protein uS7 (155 aa).

The protein belongs to the universal ribosomal protein uS7 family. In terms of assembly, part of the 30S ribosomal subunit. Contacts proteins S9 and S11.

One of the primary rRNA binding proteins, it binds directly to 16S rRNA where it nucleates assembly of the head domain of the 30S subunit. Is located at the subunit interface close to the decoding center, probably blocks exit of the E-site tRNA. In Corynebacterium aurimucosum (strain ATCC 700975 / DSM 44827 / CIP 107346 / CN-1) (Corynebacterium nigricans), this protein is Small ribosomal subunit protein uS7.